Reading from the N-terminus, the 260-residue chain is UPF0246 protein SCO2297 (260 aa).

Belongs to the UPF0246 family.

The sequence is that of UPF0246 protein SCO2297 from Streptomyces coelicolor (strain ATCC BAA-471 / A3(2) / M145).